A 452-amino-acid chain; its full sequence is MDRRIFGLENEYGVTCVFRGQRRLSPDEVARYLFRRVVSWGRSSNVFLKNGARLYLDVGSHPEYATPECDSVPDLVTHDKAGERILEGLLVEAERRLREEGIAGDIHLFKNNTDSAGNSYGCHENYLVGRHGEFSRLADVLVPFLVSRQILCGAGKVLQTPRGAVYCISQRAEHIWESVSSATTRSRPIINTRDEPHADAERFRRLHVIVGDSNMSETTMLLKLGSTDLVLRMIEAGVVLRDMSLENPIRAIREVSHDMTCQRRIKLANGREVSALDIQREYYSKAVEFVERRGGDAVAKRVLDLWGRTLLAIETEDLELVAREIDWVTKFVLIDRFRLKHGLSLASPRVAELDLKYHDIHRDRGLYYRMERAGLVERVTRDLDIFEAKSVPPQTTRARLRGEFIKRAQEKRRDFTVDWVHLKLNDQAQRTVLCKDPFRSVDDRVDKLIASM.

Glu-9 lines the Mg(2+) pocket. Arg-53 provides a ligand contact to ATP. Residue Tyr-55 coordinates Mg(2+). Asp-57 (proton acceptor) is an active-site residue. Glu-63 serves as a coordination point for Mg(2+). Positions 66 and 419 each coordinate ATP.

The protein belongs to the Pup ligase/Pup deamidase family. Pup-conjugating enzyme subfamily.

It carries out the reaction ATP + [prokaryotic ubiquitin-like protein]-L-glutamate + [protein]-L-lysine = ADP + phosphate + N(6)-([prokaryotic ubiquitin-like protein]-gamma-L-glutamyl)-[protein]-L-lysine.. It functions in the pathway protein degradation; proteasomal Pup-dependent pathway. The protein operates within protein modification; protein pupylation. Catalyzes the covalent attachment of the prokaryotic ubiquitin-like protein modifier Pup to the proteasomal substrate proteins, thereby targeting them for proteasomal degradation. This tagging system is termed pupylation. The ligation reaction involves the side-chain carboxylate of the C-terminal glutamate of Pup and the side-chain amino group of a substrate lysine. This Parafrankia sp. (strain EAN1pec) protein is Pup--protein ligase.